The chain runs to 365 residues: Bifunctional chorismate mutase/prephenate dehydratase (365 aa).

The Chorismate mutase domain maps to 1–96; sequence MSEADQLKAL…SCLALEQPLR (96 aa). Substrate contacts are provided by arginine 11, arginine 28, lysine 39, and glutamate 57. Residues 97 to 272 form the Prephenate dehydratase domain; sequence VAYLGPEGTF…NSTRFLIIGS (176 aa). One can recognise an ACT domain in the interval 284-361; it reads SIIVSMRNKP…VALKVLGSYP (78 aa).

The protein localises to the cytoplasm. The catalysed reaction is chorismate = prephenate. The enzyme catalyses prephenate + H(+) = 3-phenylpyruvate + CO2 + H2O. Its pathway is amino-acid biosynthesis; L-phenylalanine biosynthesis; phenylpyruvate from prephenate: step 1/1. The protein operates within metabolic intermediate biosynthesis; prephenate biosynthesis; prephenate from chorismate: step 1/1. In terms of biological role, catalyzes the Claisen rearrangement of chorismate to prephenate and the decarboxylation/dehydration of prephenate to phenylpyruvate. This is Bifunctional chorismate mutase/prephenate dehydratase from Stutzerimonas stutzeri (Pseudomonas stutzeri).